The sequence spans 132 residues: Small ribosomal subunit protein uS13 (132 aa).

Residues 106–132 (PVRGQVTQKNARTRKGPRKTVAGKKGK) are disordered. A compositionally biased stretch (basic residues) spans 116–132 (ARTRKGPRKTVAGKKGK).

Belongs to the universal ribosomal protein uS13 family. Part of the 30S ribosomal subunit. Forms a loose heterodimer with protein S19. Forms two bridges to the 50S subunit in the 70S ribosome.

In terms of biological role, located at the top of the head of the 30S subunit, it contacts several helices of the 16S rRNA. In the 70S ribosome it contacts the 23S rRNA (bridge B1a) and protein L5 of the 50S subunit (bridge B1b), connecting the 2 subunits; these bridges are implicated in subunit movement. Contacts the tRNAs in the A and P-sites. In Mycoplasmopsis pulmonis (strain UAB CTIP) (Mycoplasma pulmonis), this protein is Small ribosomal subunit protein uS13.